Here is a 376-residue protein sequence, read N- to C-terminus: Cytochrome b (376 aa).

A run of 4 helical transmembrane segments spans residues 28–48 (YGFL…FLAS), 72–94 (WCFR…LHIL), 107–127 (SWIS…IGYV), and 169–189 (FFVL…IHIF). Heme b contacts are provided by histidine 78 and histidine 92. Histidine 173 and histidine 187 together coordinate heme b. An a ubiquinone-binding site is contributed by histidine 192. Helical transmembrane passes span 214-234 (LLSL…IQSI), 274-294 (IPSK…LFLL), 317-337 (VPII…CPLP), and 340-360 (IFIL…LFSL).

Belongs to the cytochrome b family. In terms of assembly, the main subunits of complex b-c1 are: cytochrome b, cytochrome c1 and the Rieske protein. It depends on heme b as a cofactor.

It is found in the mitochondrion inner membrane. Its function is as follows. Component of the ubiquinol-cytochrome c reductase complex (complex III or cytochrome b-c1 complex) that is part of the mitochondrial respiratory chain. The b-c1 complex mediates electron transfer from ubiquinol to cytochrome c. Contributes to the generation of a proton gradient across the mitochondrial membrane that is then used for ATP synthesis. This Plasmodium berghei protein is Cytochrome b (MT-CYB).